We begin with the raw amino-acid sequence, 323 residues long: MLRGKATVAAAQPRRTFVLAGMLSLGQLVIGREARLADAMARGDLHNKNEDYQAKQLQELEARLQGLRNTRPSAPRYEGHVPLWWHEKALLFGISGLRSFFHPENGMNIVQLGEAAAIPCFLESLRRTMLSDATGRRILREQPNISEPDLDMDKLAQLPTNTLGHTFYRWLRKEGVTPDTRAPVTYIDDPVHAYIFKRYRQCHDFYHAITGLPIIIEGEIAVKALEAANIGVPMAALGALLAPLRLRAAQRERLRNIYLPWAIETGLSAKPLINVYWEELLEHDVDQLRAELGIRVPPDLRLIRQEQLQRRRSFKMKYESFEN.

H203, D204, H207, and E219 together coordinate Zn(2+).

Belongs to the COQ4 family. Component of a multi-subunit COQ enzyme complex, composed of at least COQ3, COQ4, COQ5, COQ6, COQ7 and COQ9. Zn(2+) serves as cofactor.

The protein localises to the mitochondrion inner membrane. It carries out the reaction a 4-hydroxy-3-methoxy-5-(all-trans-polyprenyl)benzoate + H(+) = a 2-methoxy-6-(all-trans-polyprenyl)phenol + CO2. It functions in the pathway cofactor biosynthesis; ubiquinone biosynthesis. Functionally, lyase that catalyzes the C1-decarboxylation of 4-hydroxy-3-methoxy-5-(all-trans-polyprenyl)benzoic acid into 2-methoxy-6-(all-trans-polyprenyl)phenol during ubiquinone biosynthesis. This chain is Ubiquinone biosynthesis protein COQ4, mitochondrial, found in Eremothecium gossypii (strain ATCC 10895 / CBS 109.51 / FGSC 9923 / NRRL Y-1056) (Yeast).